Consider the following 230-residue polypeptide: MVPEYSRFYNILGYNFKDYTLLIRALTHRSKTKKNYERLEFLGDSVLSFVIAEVLYKQFTDLAEGKLSQLRSKLVKGTTLAQLASSLKMDEYIILGASEQGGHKREKILEDVFEAVIGAIYLDSDFATVKKVILKWYQPIISSINLDTIKFKDSKSKLQEILLQNALSLPEYSIETIDGKDHEQQFTVVAVSKDLNLRVKAQGTSRKKAEQKTAEKMIEMLSQQGLHEKK.

An RNase III domain is found at 5-125; that stretch reads YSRFYNILGY…VIGAIYLDSD (121 aa). Glu-40 is a binding site for Mg(2+). Residue Asp-44 is part of the active site. Residues Asp-111 and Glu-114 each contribute to the Mg(2+) site. Residue Glu-114 is part of the active site. The region spanning 153–223 is the DRBM domain; the sequence is DSKSKLQEIL…AEKMIEMLSQ (71 aa).

The protein belongs to the ribonuclease III family. Homodimer. Mg(2+) serves as cofactor.

It is found in the cytoplasm. The catalysed reaction is Endonucleolytic cleavage to 5'-phosphomonoester.. Functionally, digests double-stranded RNA. Involved in the processing of primary rRNA transcript to yield the immediate precursors to the large and small rRNAs (23S and 16S). Processes some mRNAs, and tRNAs when they are encoded in the rRNA operon. Processes pre-crRNA and tracrRNA of type II CRISPR loci if present in the organism. This chain is Ribonuclease 3, found in Francisella tularensis subsp. holarctica (strain OSU18).